The chain runs to 88 residues: UPF0297 protein BcerKBAB4_4234 (88 aa).

Belongs to the UPF0297 family.

The protein is UPF0297 protein BcerKBAB4_4234 of Bacillus mycoides (strain KBAB4) (Bacillus weihenstephanensis).